The sequence spans 193 residues: Pyridoxal 5'-phosphate synthase subunit PdxT (193 aa).

Position 50-52 (50-52) interacts with L-glutamine; sequence GES. Cys-82 serves as the catalytic Nucleophile. L-glutamine is bound by residues Arg-109 and 136 to 137; that span reads IR. Residues His-172 and Glu-174 each act as charge relay system in the active site.

Belongs to the glutaminase PdxT/SNO family. In the presence of PdxS, forms a dodecamer of heterodimers. Only shows activity in the heterodimer.

It carries out the reaction aldehydo-D-ribose 5-phosphate + D-glyceraldehyde 3-phosphate + L-glutamine = pyridoxal 5'-phosphate + L-glutamate + phosphate + 3 H2O + H(+). The catalysed reaction is L-glutamine + H2O = L-glutamate + NH4(+). Its pathway is cofactor biosynthesis; pyridoxal 5'-phosphate biosynthesis. In terms of biological role, catalyzes the hydrolysis of glutamine to glutamate and ammonia as part of the biosynthesis of pyridoxal 5'-phosphate. The resulting ammonia molecule is channeled to the active site of PdxS. The chain is Pyridoxal 5'-phosphate synthase subunit PdxT from Streptococcus pneumoniae serotype 19F (strain G54).